We begin with the raw amino-acid sequence, 240 residues long: Transmembrane emp24 domain-containing protein 6 (240 aa).

An N-terminal signal peptide occupies residues 1–21 (MFPLLFVAGLVVLNLVSSARS). The Lumenal portion of the chain corresponds to 22-200 (QKTEPLSGTG…FFLLQSNYNY (179 aa)). The 86-residue stretch at 53 to 138 (TECFWQFAHQ…SVQVYLNFGV (86 aa)) folds into the GOLD domain. Residues Asn107 and Asn156 are each glycosylated (N-linked (GlcNAc...) asparagine). The chain crosses the membrane as a helical span at residues 201–223 (VNWWSTAQSLVIVLSGILQLYFL). The Cytoplasmic portion of the chain corresponds to 224 to 240 (KRLFNTPMTTETQKPRC).

The protein belongs to the EMP24/GP25L family.

Its subcellular location is the endoplasmic reticulum membrane. The sequence is that of Transmembrane emp24 domain-containing protein 6 (TMED6) from Bos taurus (Bovine).